Reading from the N-terminus, the 891-residue chain is DNA mismatch repair protein MutS (891 aa).

634-641 (GPNMGGKS) is an ATP binding site.

It belongs to the DNA mismatch repair MutS family.

In terms of biological role, this protein is involved in the repair of mismatches in DNA. It is possible that it carries out the mismatch recognition step. This protein has a weak ATPase activity. In Burkholderia mallei (strain NCTC 10247), this protein is DNA mismatch repair protein MutS.